A 230-amino-acid chain; its full sequence is 6-carboxyhexanoate--CoA ligase (230 aa).

Belongs to the BioW family. As to quaternary structure, homodimer. Requires Mg(2+) as cofactor.

The enzyme catalyses heptanedioate + ATP + CoA = 6-carboxyhexanoyl-CoA + AMP + diphosphate. The protein operates within metabolic intermediate metabolism; pimeloyl-CoA biosynthesis; pimeloyl-CoA from pimelate: step 1/1. Catalyzes the transformation of pimelate into pimeloyl-CoA with concomitant hydrolysis of ATP to AMP. The sequence is that of 6-carboxyhexanoate--CoA ligase from Staphylococcus aureus (strain Mu3 / ATCC 700698).